Reading from the N-terminus, the 356-residue chain is Protein-glutamate methylesterase/protein-glutamine glutaminase 3 (356 aa).

Positions 3-120 (KVAIVDDSAV…KGFLEESQAR (118 aa)) constitute a Response regulatory domain. Asp54 is modified (4-aspartylphosphate). Residues 165-356 (NQTTDRVVAL…AEEIIAFTKQ (192 aa)) enclose the CheB-type methylesterase domain. Catalysis depends on residues Ser177, His203, and Asp299.

Belongs to the CheB family. In terms of processing, phosphorylated by CheA. Phosphorylation of the N-terminal regulatory domain activates the methylesterase activity.

The protein localises to the cytoplasm. The catalysed reaction is [protein]-L-glutamate 5-O-methyl ester + H2O = L-glutamyl-[protein] + methanol + H(+). It carries out the reaction L-glutaminyl-[protein] + H2O = L-glutamyl-[protein] + NH4(+). Functionally, involved in chemotaxis. Part of a chemotaxis signal transduction system that modulates chemotaxis in response to various stimuli. Catalyzes the demethylation of specific methylglutamate residues introduced into the chemoreceptors (methyl-accepting chemotaxis proteins or MCP) by CheR. Also mediates the irreversible deamidation of specific glutamine residues to glutamic acid. This chain is Protein-glutamate methylesterase/protein-glutamine glutaminase 3, found in Shewanella oneidensis (strain ATCC 700550 / JCM 31522 / CIP 106686 / LMG 19005 / NCIMB 14063 / MR-1).